Consider the following 208-residue polypeptide: Large ribosomal subunit protein uL3 (208 aa).

Gln149 is subject to N5-methylglutamine.

This sequence belongs to the universal ribosomal protein uL3 family. As to quaternary structure, part of the 50S ribosomal subunit. Forms a cluster with proteins L14 and L19. In terms of processing, methylated by PrmB.

Its function is as follows. One of the primary rRNA binding proteins, it binds directly near the 3'-end of the 23S rRNA, where it nucleates assembly of the 50S subunit. This is Large ribosomal subunit protein uL3 from Mannheimia succiniciproducens (strain KCTC 0769BP / MBEL55E).